A 46-amino-acid polypeptide reads, in one-letter code: uncharacterized protein (46 aa).

The disordered stretch occupies residues M1–P46. Positions F25–G40 are enriched in polar residues.

This is an uncharacterized protein from Dictyostelium discoideum (Social amoeba).